Consider the following 469-residue polypeptide: Glutamate--tRNA ligase (469 aa).

The 'HIGH' region signature appears at P11–N21. The span at G118–P131 shows a compositional bias: basic and acidic residues. The tract at residues G118–P139 is disordered. The 'KMSKS' region motif lies at K243–R247. Position 246 (K246) interacts with ATP.

It belongs to the class-I aminoacyl-tRNA synthetase family. Glutamate--tRNA ligase type 1 subfamily. As to quaternary structure, monomer.

Its subcellular location is the cytoplasm. It catalyses the reaction tRNA(Glu) + L-glutamate + ATP = L-glutamyl-tRNA(Glu) + AMP + diphosphate. Its function is as follows. Catalyzes the attachment of glutamate to tRNA(Glu) in a two-step reaction: glutamate is first activated by ATP to form Glu-AMP and then transferred to the acceptor end of tRNA(Glu). The polypeptide is Glutamate--tRNA ligase (Burkholderia mallei (strain NCTC 10247)).